A 398-amino-acid polypeptide reads, in one-letter code: 4-hydroxy-3-methylbut-2-en-1-yl diphosphate synthase (ferredoxin) (398 aa).

Residues C306, C309, C340, and E347 each coordinate [4Fe-4S] cluster.

Belongs to the IspG family. The cofactor is [4Fe-4S] cluster.

It carries out the reaction (2E)-4-hydroxy-3-methylbut-2-enyl diphosphate + 2 oxidized [2Fe-2S]-[ferredoxin] + H2O = 2-C-methyl-D-erythritol 2,4-cyclic diphosphate + 2 reduced [2Fe-2S]-[ferredoxin] + H(+). The protein operates within isoprenoid biosynthesis; isopentenyl diphosphate biosynthesis via DXP pathway; isopentenyl diphosphate from 1-deoxy-D-xylulose 5-phosphate: step 5/6. Functionally, converts 2C-methyl-D-erythritol 2,4-cyclodiphosphate (ME-2,4cPP) into 1-hydroxy-2-methyl-2-(E)-butenyl 4-diphosphate. This chain is 4-hydroxy-3-methylbut-2-en-1-yl diphosphate synthase (ferredoxin), found in Synechococcus sp. (strain CC9311).